The following is a 61-amino-acid chain: Photosystem II reaction center protein K (61 aa).

Residues 1–24 (MLNIFSLICICLNSALYSSNFFFA) constitute a propeptide that is removed on maturation. The helical transmembrane segment at 40-60 (MPVIPLFFFLLAFVWQAAVSF) threads the bilayer.

It belongs to the PsbK family. As to quaternary structure, PSII is composed of 1 copy each of membrane proteins PsbA, PsbB, PsbC, PsbD, PsbE, PsbF, PsbH, PsbI, PsbJ, PsbK, PsbL, PsbM, PsbT, PsbX, PsbY, PsbZ, Psb30/Ycf12, at least 3 peripheral proteins of the oxygen-evolving complex and a large number of cofactors. It forms dimeric complexes.

Its subcellular location is the plastid. It is found in the chloroplast thylakoid membrane. In terms of biological role, one of the components of the core complex of photosystem II (PSII). PSII is a light-driven water:plastoquinone oxidoreductase that uses light energy to abstract electrons from H(2)O, generating O(2) and a proton gradient subsequently used for ATP formation. It consists of a core antenna complex that captures photons, and an electron transfer chain that converts photonic excitation into a charge separation. The chain is Photosystem II reaction center protein K from Vitis vinifera (Grape).